Here is a 185-residue protein sequence, read N- to C-terminus: Ribosome-recycling factor (185 aa).

Belongs to the RRF family.

The protein resides in the cytoplasm. Its function is as follows. Responsible for the release of ribosomes from messenger RNA at the termination of protein biosynthesis. May increase the efficiency of translation by recycling ribosomes from one round of translation to another. This is Ribosome-recycling factor from Streptococcus suis (strain 98HAH33).